A 435-amino-acid chain; its full sequence is AP-2 complex subunit mu (435 aa).

At Ser45 the chain carries Phosphoserine. Thr156 bears the Phosphothreonine mark. One can recognise an MHD domain in the interval Arg170 to Arg434. A 1,2-diacyl-sn-glycero-3-phospho-(1D-myo-inositol-3,4,5-trisphosphate) contacts are provided by Lys341, Lys345, and Lys354.

The protein belongs to the adaptor complexes medium subunit family. In terms of assembly, adaptor protein complex 2 (AP-2) is a heterotetramer composed of two large adaptins (alpha-type subunit AP2A1 or AP2A2 and beta-type subunit AP2B1), a medium adaptin (mu-type subunit AP2M1) and a small adaptin (sigma-type subunit AP2S1). Interacts with ATP6V1H and MEGF10. Interacts with EGFR and TTGN1. Interacts with F2R. Interacts with PIP5K1C; tyrosine phosphorylation of PIP5K1C weakens the interaction. Interacts with KIAA0319; required for clathrin-mediated endocytosis of KIAA0319. Interacts with DVL2 (via DEP domain). Interacts with KCNQ1; mediates estrogen-induced internalization via clathrin-coated vesicles. Interacts with P2RX4 (via internalization motif). Together with AP2A1 or AP2A2 and AP2B1, it interacts with ADAM10; this interaction facilitates ADAM10 endocytosis from the plasma membrane during long-term potentiation in hippocampal neurons. Probably interacts with ACE2 (via endocytic sorting signal motif); the interaction is inhibited by ACE2 phosphorylation. Interacts with RALBP1; the interaction is direct. Interacts with TMEM106B (via N-terminus). Phosphorylation at Thr-156 increases the affinity of the AP-2 complex for cargo membrane proteins during the initial stages of endocytosis.

It localises to the cell membrane. It is found in the membrane. The protein resides in the coated pit. In terms of biological role, component of the adaptor protein complex 2 (AP-2). Adaptor protein complexes function in protein transport via transport vesicles in different membrane traffic pathways. Adaptor protein complexes are vesicle coat components and appear to be involved in cargo selection and vesicle formation. AP-2 is involved in clathrin-dependent endocytosis in which cargo proteins are incorporated into vesicles surrounded by clathrin (clathrin-coated vesicles, CCVs) which are destined for fusion with the early endosome. The clathrin lattice serves as a mechanical scaffold but is itself unable to bind directly to membrane components. Clathrin-associated adaptor protein (AP) complexes which can bind directly to both the clathrin lattice and to the lipid and protein components of membranes are considered to be the major clathrin adaptors contributing the CCV formation. AP-2 also serves as a cargo receptor to selectively sort the membrane proteins involved in receptor-mediated endocytosis. AP-2 seems to play a role in the recycling of synaptic vesicle membranes from the presynaptic surface. AP-2 recognizes Y-X-X-[FILMV] (Y-X-X-Phi) and [ED]-X-X-X-L-[LI] endocytosis signal motifs within the cytosolic tails of transmembrane cargo molecules. AP-2 may also play a role in maintaining normal post-endocytic trafficking through the ARF6-regulated, non-clathrin pathway. During long-term potentiation in hippocampal neurons, AP-2 is responsible for the endocytosis of ADAM10. The AP-2 mu subunit binds to transmembrane cargo proteins; it recognizes the Y-X-X-Phi motifs. The surface region interacting with to the Y-X-X-Phi motif is inaccessible in cytosolic AP-2, but becomes accessible through a conformational change following phosphorylation of AP-2 mu subunit at Thr-156 in membrane-associated AP-2. The membrane-specific phosphorylation event appears to involve assembled clathrin which activates the AP-2 mu kinase AAK1. Plays a role in endocytosis of frizzled family members upon Wnt signaling. The sequence is that of AP-2 complex subunit mu (AP2M1) from Bos taurus (Bovine).